The following is a 326-amino-acid chain: PDZ domain-containing protein MAGIX (326 aa).

The tract at residues 1–32 is disordered; it reads MDSHAGNTADPRGSRRGVGLQGSGSPRARQLL. The region spanning 128–212 is the PDZ domain; sequence SVELVRGPAG…RLCLVLQRPQ (85 aa). The segment at 214–267 is disordered; it reads MNGSRSKEVGGGHQKTDRIPDPRGGRMMESRGTISPVHHRPKTRTGPGPSPESV. The segment covering 218-242 has biased composition (basic and acidic residues); that stretch reads RSKEVGGGHQKTDRIPDPRGGRMME. S263 is subject to Phosphoserine.

This is PDZ domain-containing protein MAGIX (Magix) from Rattus norvegicus (Rat).